The primary structure comprises 395 residues: MARKYAKRSKSRPRTARRSPKSRSRPRSRAPRRKAPSRPRIQRVNPVRRPMNSTAAQSLAIYRNPFSHSPGQPKIPDGKAIMSIGSKVQVSAQLLNKASGDDILHVFLYPGLTQGMVVFGDSKEQGTRGFTAYGYNDHMTYDASSVYNAGTGADGNIESNDNINEWRLVSQGLKLSLLNTDEENDGWFECVRYKDALRANEFAFYSGDNLEQTTATVFGPDITFGSTLLTKNLVNSPTYVSGALEDIDKYEFKLQAQSEQHDFKRIPDRWYTEHGVDTVTVSGVNDYVTLQADTAQAHSIHNSLVDDSFDAVYIRIHCRTNSGAGATTGSKLLAHLVSNQELVYDEDQNEHKFMTQAAMAKAEFMKANEMARKSQVGADMIGNVRSGVRSQRRPR.

Positions 1–41 (MARKYAKRSKSRPRTARRSPKSRSRPRSRAPRRKAPSRPRI) are enriched in basic residues. Residues 1–51 (MARKYAKRSKSRPRTARRSPKSRSRPRSRAPRRKAPSRPRIQRVNPVRRPM) are disordered. The short motif at 2–9 (ARKYAKRS) is the Nuclear localization signal element.

It localises to the host nucleus. Its subcellular location is the virion. In terms of biological role, self-assembles to form the virion icosahedral capsid. This chain is Capsid protein, found in Chaetoceros setoense (Chaetoceros setoense DNA virus).